The primary structure comprises 530 residues: Putative ABC transporter ATP-binding protein SSO1893 (530 aa).

2 consecutive ABC transporter domains span residues 6-243 (IRDL…LGLE) and 282-516 (ILFA…EPPL). ATP contacts are provided by residues 38–45 (GRSGSGKS) and 314–321 (GKNGSGKT).

It belongs to the ABC transporter superfamily.

It localises to the cell membrane. Probably part of an ABC transporter complex. Responsible for energy coupling to the transport system. This is Putative ABC transporter ATP-binding protein SSO1893 from Saccharolobus solfataricus (strain ATCC 35092 / DSM 1617 / JCM 11322 / P2) (Sulfolobus solfataricus).